A 680-amino-acid chain; its full sequence is Anosmin-1 (680 aa).

Positions 1–24 (MVPGVPGAVLTLCLWLAASSGCLA) are cleaved as a signal peptide. Intrachain disulfides connect Cys49-Cys83, Cys53-Cys77, Cys86-Cys105, Cys90-Cys101, and Cys116-Cys120. An N-linked (GlcNAc...) asparagine glycan is attached at Asn71. In terms of domain architecture, WAP spans 127–176 (LLVKQGDCPAPEKASGFAAACVESCEVDNECSGVKKCCSNGCGHTCQVPK). Fibronectin type-III domains are found at residues 186–287 (PRKE…SKDP), 292–400 (APAN…THAT), 425–523 (PTRP…TPPC), and 550–658 (KPEN…LPPS). Asn209, Asn300, Asn470, Asn553, and Asn564 each carry an N-linked (GlcNAc...) asparagine glycan. Residues 642–680 (EGPATIKTFRTPELPPSSAHRSHLKHRHPHHYKPSPERY) form a disordered region. Residues 661–674 (HRSHLKHRHPHHYK) are compositionally biased toward basic residues.

As to quaternary structure, interacts with FGFR1; this interaction does not interfere with FGF2-binding to FGFR1. Binds heparin. Heparin may promote or interfere with ANOS1-FGFR1-FGF2 complex formation depending on the sequential order of its binding to the various constituents. For instance, heparin-ANOS1 interaction favors subsequent binding to pre-existing binary FGFR1-FGF2 complex, while heparin-FGF2 complex does not interact with ANOS1-FGFR1. In terms of processing, N-glycosylated. May be proteolytically cleaved at the cell surface and released from the cell surface. Expressed in the cerebellum (at protein level).

The protein resides in the cell membrane. It is found in the secreted. In terms of biological role, has a dual branch-promoting and guidance activity, which may play an important role in the patterning of mitral and tufted cell collaterals to the olfactory cortex. Chemoattractant for fetal olfactory epithelial cells. This Homo sapiens (Human) protein is Anosmin-1.